Reading from the N-terminus, the 292-residue chain is AKT-interacting protein homolog B (292 aa).

The tract at residues 1 to 44 is disordered; sequence MNPFWNMPSASVRKRSDNDEKIATADQKISPARSSSAKKQLPSI. The segment covering 14-23 has biased composition (basic and acidic residues); it reads KRSDNDEKIA. One can recognise a UBC core domain in the interval 75–223; that stretch reads YLEYSLLAEF…VVDSVKLCNS (149 aa).

This sequence belongs to the ubiquitin-conjugating enzyme family. FTS subfamily.

The protein resides in the cytoplasm. Its subcellular location is the cell membrane. In terms of biological role, may function to promote vesicle trafficking and/or fusion. May also regulate apoptosis. This Xenopus laevis (African clawed frog) protein is AKT-interacting protein homolog B (aktip-b).